The following is a 375-amino-acid chain: 23S rRNA (uracil(747)-C(5))-methyltransferase RlmC (375 aa).

The [4Fe-4S] cluster site is built by cysteine 3, cysteine 11, cysteine 14, and cysteine 87. Residues glutamine 212, phenylalanine 241, glutamate 262, and asparagine 307 each contribute to the S-adenosyl-L-methionine site. The active-site Nucleophile is the cysteine 334.

The protein belongs to the class I-like SAM-binding methyltransferase superfamily. RNA M5U methyltransferase family. RlmC subfamily.

The enzyme catalyses uridine(747) in 23S rRNA + S-adenosyl-L-methionine = 5-methyluridine(747) in 23S rRNA + S-adenosyl-L-homocysteine + H(+). In terms of biological role, catalyzes the formation of 5-methyl-uridine at position 747 (m5U747) in 23S rRNA. The polypeptide is 23S rRNA (uracil(747)-C(5))-methyltransferase RlmC (Escherichia coli O7:K1 (strain IAI39 / ExPEC)).